The following is a 421-amino-acid chain: Testin (421 aa).

One can recognise a PET domain in the interval M92–D199. LIM zinc-binding domains lie at Y234–E297, P299–V359, and Q362–S421.

The protein belongs to the prickle / espinas / testin family. As to quaternary structure, interacts via LIM domain 1 with ZYX. Interacts (via LIM domain 3) with ENAH and VASP. Interacts with ALKBH4, talin, actin, alpha-actinin, GRIP1 and PXN. Interacts (via LIM domain 2) with ACTL7A (via N-terminus). Heterodimer with ACTL7A; the heterodimer interacts with ENAH to form a heterotrimer.

The protein resides in the cytoplasm. It is found in the cell junction. Its subcellular location is the focal adhesion. Scaffold protein that may play a role in cell adhesion, cell spreading and in the reorganization of the actin cytoskeleton. Plays a role in the regulation of cell proliferation. May act as a tumor suppressor. In Nomascus leucogenys (Northern white-cheeked gibbon), this protein is Testin (TES).